A 122-amino-acid polypeptide reads, in one-letter code: Small ribosomal subunit protein uS13 (122 aa).

The segment at 99–122 is disordered; the sequence is RGQRTHTNARTRKGPAKAIAGKKK.

The protein belongs to the universal ribosomal protein uS13 family. As to quaternary structure, part of the 30S ribosomal subunit. Forms a loose heterodimer with protein S19. Forms two bridges to the 50S subunit in the 70S ribosome.

Its function is as follows. Located at the top of the head of the 30S subunit, it contacts several helices of the 16S rRNA. In the 70S ribosome it contacts the 23S rRNA (bridge B1a) and protein L5 of the 50S subunit (bridge B1b), connecting the 2 subunits; these bridges are implicated in subunit movement. Contacts the tRNAs in the A and P-sites. The polypeptide is Small ribosomal subunit protein uS13 (Bradyrhizobium sp. (strain BTAi1 / ATCC BAA-1182)).